Consider the following 59-residue polypeptide: UPF0434 protein Shewmr7_2490 (59 aa).

This sequence belongs to the UPF0434 family.

This chain is UPF0434 protein Shewmr7_2490, found in Shewanella sp. (strain MR-7).